The primary structure comprises 626 residues: Glutamine--fructose-6-phosphate aminotransferase [isomerizing] (626 aa).

The Nucleophile; for GATase activity role is filled by cysteine 2. The Glutamine amidotransferase type-2 domain occupies 2 to 222 (CGIVGYIGPQ…NGELARLTPT (221 aa)). 2 consecutive SIS domains span residues 293–441 (LPPS…QRQS) and 471–616 (YIEA…VDQP). Catalysis depends on lysine 621, which acts as the For Fru-6P isomerization activity.

As to quaternary structure, homodimer.

Its subcellular location is the cytoplasm. The enzyme catalyses D-fructose 6-phosphate + L-glutamine = D-glucosamine 6-phosphate + L-glutamate. Functionally, catalyzes the first step in hexosamine metabolism, converting fructose-6P into glucosamine-6P using glutamine as a nitrogen source. This is Glutamine--fructose-6-phosphate aminotransferase [isomerizing] from Thermosynechococcus vestitus (strain NIES-2133 / IAM M-273 / BP-1).